Consider the following 227-residue polypeptide: Large ribosomal subunit protein uL1 (227 aa).

The protein belongs to the universal ribosomal protein uL1 family. Part of the 50S ribosomal subunit.

Its function is as follows. Binds directly to 23S rRNA. The L1 stalk is quite mobile in the ribosome, and is involved in E site tRNA release. Protein L1 is also a translational repressor protein, it controls the translation of the L11 operon by binding to its mRNA. In Mesoplasma florum (strain ATCC 33453 / NBRC 100688 / NCTC 11704 / L1) (Acholeplasma florum), this protein is Large ribosomal subunit protein uL1.